A 346-amino-acid polypeptide reads, in one-letter code: N-acetyl-gamma-glutamyl-phosphate reductase (346 aa).

The active site involves Cys-150.

Belongs to the NAGSA dehydrogenase family. Type 1 subfamily.

Its subcellular location is the cytoplasm. The catalysed reaction is N-acetyl-L-glutamate 5-semialdehyde + phosphate + NADP(+) = N-acetyl-L-glutamyl 5-phosphate + NADPH + H(+). The protein operates within amino-acid biosynthesis; L-arginine biosynthesis; N(2)-acetyl-L-ornithine from L-glutamate: step 3/4. Its function is as follows. Catalyzes the NADPH-dependent reduction of N-acetyl-5-glutamyl phosphate to yield N-acetyl-L-glutamate 5-semialdehyde. The polypeptide is N-acetyl-gamma-glutamyl-phosphate reductase (Moorella thermoacetica (strain ATCC 39073 / JCM 9320)).